Here is a 337-residue protein sequence, read N- to C-terminus: Ornithine carbamoyltransferase (337 aa).

Carbamoyl phosphate is bound by residues 57-60 (STRT), Gln84, Arg108, and 135-138 (HPTQ). Residues Asn167, Asp231, and 235–236 (SM) each bind L-ornithine. Residues 272 to 273 (CL) and Arg317 contribute to the carbamoyl phosphate site.

The protein belongs to the aspartate/ornithine carbamoyltransferase superfamily. OTCase family.

It localises to the cytoplasm. The enzyme catalyses carbamoyl phosphate + L-ornithine = L-citrulline + phosphate + H(+). It participates in amino-acid degradation; L-arginine degradation via ADI pathway; carbamoyl phosphate from L-arginine: step 2/2. Functionally, reversibly catalyzes the transfer of the carbamoyl group from carbamoyl phosphate (CP) to the N(epsilon) atom of ornithine (ORN) to produce L-citrulline. The chain is Ornithine carbamoyltransferase from Streptococcus uberis (strain ATCC BAA-854 / 0140J).